Here is a 182-residue protein sequence, read N- to C-terminus: N-alpha-acetyltransferase daf-31 (182 aa).

Residues 1-152 (MNIRCARVDD…DAYAMRRDLA (152 aa)) form the N-acetyltransferase domain. The disordered stretch occupies residues 162–182 (PADREAYTTAKTTDDKKKNRS).

It belongs to the acetyltransferase family. ARD1 subfamily. Component of the N-terminal acetyltransferase A (NatA) complex. As to expression, expressed in head and tail hypodermal cells, hypodermal seam cells, pharynx, intestine and head and tail neurons.

The enzyme catalyses N-terminal glycyl-[protein] + acetyl-CoA = N-terminal N(alpha)-acetylglycyl-[protein] + CoA + H(+). It catalyses the reaction N-terminal L-alanyl-[protein] + acetyl-CoA = N-terminal N(alpha)-acetyl-L-alanyl-[protein] + CoA + H(+). The catalysed reaction is N-terminal L-seryl-[protein] + acetyl-CoA = N-terminal N(alpha)-acetyl-L-seryl-[protein] + CoA + H(+). It carries out the reaction N-terminal L-valyl-[protein] + acetyl-CoA = N-terminal N(alpha)-acetyl-L-valyl-[protein] + CoA + H(+). The enzyme catalyses N-terminal L-cysteinyl-[protein] + acetyl-CoA = N-terminal N(alpha)-acetyl-L-cysteinyl-[protein] + CoA + H(+). It catalyses the reaction N-terminal L-threonyl-[protein] + acetyl-CoA = N-terminal N(alpha)-acetyl-L-threonyl-[protein] + CoA + H(+). Its function is as follows. Catalytic subunit of the N-terminal acetyltransferase A (NatA) complex which displays alpha (N-terminal) acetyltransferase activity. Plays a role in regulating larval development, metabolism and longevity. Functions downstream or alongside daf-3, daf-12 and daf-16 in the dauer formation pathway. Functions upstream of daf-15 to enable animal development. This is N-alpha-acetyltransferase daf-31 from Caenorhabditis elegans.